A 282-amino-acid polypeptide reads, in one-letter code: MNKGDAIDFLCEKLNLQPTAVAHVEQIHSGFTNFSFFTELKDGSKYQVRLARKDVPLNRRNEQIILDLVTPIFGNPFVYFDVTAGNAIKKWIEGKQPKRPTRLFLEQLVASLKKVHAVEWKQFANEIWIFDPLIYFNQTKLPDFYKKLYVELTDKHKAIPKTLCHHDSTFDNLVYTPKKQVVLIDFEWSCVDNPYYEIANIIREELTIETANQIIDLYGSLDKKLVFETVIYVLLFAFQWTEIMPQTQQIIDYKKWVQKRLNYFLKALFPNTWKIAKTIPLY.

This is an uncharacterized protein from Mycoplasma pneumoniae (strain ATCC 29342 / M129 / Subtype 1) (Mycoplasmoides pneumoniae).